Here is a 500-residue protein sequence, read N- to C-terminus: MSFDDLHKATERAVIQAVDQICDDFEVTPEKLDELTAYFIEQMEKGLAPPKEGHTLASDKGLPMIPAFVTGSPNGTERGVLLAADLGGTNFRICSVNLHGDHTFSMEQMKSKIPDDLLDDENVTSDDLFGFLARRTLAFMKKYHPDELAKGKDAKPMKLGFTFSYPVDQTSLNSGTLIRWTKGFRIADTVGKDVVQLYQEQLSAQGMPMIKVVALTNDTVGTYLSHCYTSDNTDSMTSGEISEPVIGCIFGTGTNGCYMEEINKITKLPQELRDKLIKEGKTHMIINVEWGSFDNELKHLPTTKYDVVIDQKLSTNPGFHLFEKRVSGMFLGEVLRNILVDLHSQGLLLQQYRSKEQLPRHLTTPFQLSSEVLSHIEIDDSTGLRETELSLLQSLRLPTTPTERVQIQKLVRAISRRSAYLAAVPLAAILIKTNALNKRYHGEVEIGCDGSVVEYYPGFRSMLRHALALSPLGAEGERKVHLKIAKDGSGVGAALCALVA.

Serine 2 bears the N-acetylserine mark. Serine 2 bears the Phosphoserine mark. Residues 12 to 498 (RAVIQAVDQI…SGVGAALCAL (487 aa)) enclose the Hexokinase domain. The tract at residues 74-216 (NGTERGVLLA…MPMIKVVALT (143 aa)) is hexokinase small subdomain. An ATP-binding site is contributed by lysine 110. Positions 158 to 184 (KLGFTFSYPVDQTSLNSGTLIRWTKGF) are glucose-binding. Residues 217 to 487 (NDTVGTYLSH…RKVHLKIAKD (271 aa)) are hexokinase large subdomain. Serine 470 carries the phosphoserine modification. 487 to 492 (DGSGVG) lines the ATP pocket.

Belongs to the hexokinase family. As to quaternary structure, monomer.

It carries out the reaction D-glucose + ATP = D-glucose 6-phosphate + ADP + H(+). It participates in carbohydrate metabolism; hexose metabolism. The protein operates within carbohydrate degradation; glycolysis; D-glyceraldehyde 3-phosphate and glycerone phosphate from D-glucose: step 1/4. Its function is as follows. Two isoenzymes, hexokinase-1 and hexokinase-2, can phosphorylate keto- and aldohexoses in yeast, whereas a third isoenzyme, GLK, is specific for aldohexoses. All glucose phosphorylating enzymes are involved in glucose uptake. This chain is Glucokinase-1 (GLK1), found in Saccharomyces cerevisiae (strain ATCC 204508 / S288c) (Baker's yeast).